Reading from the N-terminus, the 492-residue chain is Steroid 21-hydroxylase (492 aa).

The heme b site is built by R91 and K120. R231 contributes to the 17alpha-hydroxyprogesterone binding site. R231 contributes to the progesterone binding site. Heme b is bound by residues H363, R424, and C426.

This sequence belongs to the cytochrome P450 family. It depends on heme b as a cofactor.

The protein localises to the endoplasmic reticulum membrane. The protein resides in the microsome membrane. The catalysed reaction is 17alpha-hydroxyprogesterone + reduced [NADPH--hemoprotein reductase] + O2 = 11-deoxycortisol + oxidized [NADPH--hemoprotein reductase] + H2O + H(+). It carries out the reaction progesterone + reduced [NADPH--hemoprotein reductase] + O2 = 21-hydroxyprogesterone + oxidized [NADPH--hemoprotein reductase] + H2O + H(+). Functionally, specifically catalyzes the 21-hydroxylation of steroids. Required for the adrenal synthesis of mineralocorticoids and glucocorticoids. This chain is Steroid 21-hydroxylase (CYP21), found in Lynx lynx (Eurasian lynx).